Here is an 88-residue protein sequence, read N- to C-terminus: Small ribosomal subunit protein bS20 (88 aa).

The interval 1–26 is disordered; the sequence is MANTAQARKRARQNTKRRQNSASQRS. The segment covering 7–19 has biased composition (basic residues); the sequence is ARKRARQNTKRRQ.

The protein belongs to the bacterial ribosomal protein bS20 family.

Functionally, binds directly to 16S ribosomal RNA. This Psychrobacter arcticus (strain DSM 17307 / VKM B-2377 / 273-4) protein is Small ribosomal subunit protein bS20.